A 374-amino-acid chain; its full sequence is Chaperone protein DnaJ (374 aa).

Residues 5–70 enclose the J domain; that stretch reads DYYEVLGVAR…NKRRMYDSHG (66 aa). The CR-type zinc finger occupies 130-207; that stretch reads GVERRIEIPT…CHGNGRVEED (78 aa). Cysteine 143, cysteine 146, cysteine 159, cysteine 162, cysteine 181, cysteine 184, cysteine 195, and cysteine 198 together coordinate Zn(2+). CXXCXGXG motif repeat units lie at residues 143-150, 159-166, 181-188, and 195-202; these read CGDCDGSG, CNVCHGRG, CHNCGGRG, and CKTCHGNG.

The protein belongs to the DnaJ family. In terms of assembly, homodimer. Zn(2+) serves as cofactor.

The protein localises to the cytoplasm. Its function is as follows. Participates actively in the response to hyperosmotic and heat shock by preventing the aggregation of stress-denatured proteins and by disaggregating proteins, also in an autonomous, DnaK-independent fashion. Unfolded proteins bind initially to DnaJ; upon interaction with the DnaJ-bound protein, DnaK hydrolyzes its bound ATP, resulting in the formation of a stable complex. GrpE releases ADP from DnaK; ATP binding to DnaK triggers the release of the substrate protein, thus completing the reaction cycle. Several rounds of ATP-dependent interactions between DnaJ, DnaK and GrpE are required for fully efficient folding. Also involved, together with DnaK and GrpE, in the DNA replication of plasmids through activation of initiation proteins. The chain is Chaperone protein DnaJ from Stenotrophomonas maltophilia (strain K279a).